The chain runs to 357 residues: Peptide chain release factor 1 (357 aa).

At Gln-236 the chain carries N5-methylglutamine.

The protein belongs to the prokaryotic/mitochondrial release factor family. Post-translationally, methylated by PrmC. Methylation increases the termination efficiency of RF1.

Its subcellular location is the cytoplasm. In terms of biological role, peptide chain release factor 1 directs the termination of translation in response to the peptide chain termination codons UAG and UAA. In Mycobacterium ulcerans (strain Agy99), this protein is Peptide chain release factor 1.